The following is a 677-amino-acid chain: O-fucosyltransferase 27 (677 aa).

Residues 15–35 (WIGLLGLVLSAFSLLVHFLLA) form a helical; Signal-anchor for type II membrane protein membrane-spanning segment. The N-linked (GlcNAc...) asparagine glycan is linked to Asn130. Residues 410–437 (PPSIEVETKHDSLKSTRQRPQPLPPPPA) form a disordered region. N-linked (GlcNAc...) asparagine glycosylation is found at Asn542 and Asn592. Residues 619-677 (NAEKEEDLDEEDLSSSGLFFGHKESGGNNNGNNETVNSEANNKEEGQLEDQEELEGSER) are disordered. Acidic residues predominate over residues 622–631 (KEEDLDEEDL). Positions 644–658 (GGNNNGNNETVNSEA) are enriched in low complexity. An N-linked (GlcNAc...) asparagine glycan is attached at Asn651. Residues 665–677 (QLEDQEELEGSER) are compositionally biased toward acidic residues.

It belongs to the glycosyltransferase GT106 family.

The protein resides in the membrane. The protein operates within glycan metabolism. This is O-fucosyltransferase 27 from Arabidopsis thaliana (Mouse-ear cress).